The sequence spans 92 residues: Small ribosomal subunit protein uS19 (92 aa).

The protein belongs to the universal ribosomal protein uS19 family.

Protein S19 forms a complex with S13 that binds strongly to the 16S ribosomal RNA. The polypeptide is Small ribosomal subunit protein uS19 (Bartonella bacilliformis (strain ATCC 35685 / KC583 / Herrer 020/F12,63)).